The following is a 170-amino-acid chain: Class I hydrophobin E (170 aa).

Residues 1-19 (MQLTTLLTGLISVLSVTTA) form the signal peptide. 4 disulfide bridges follow: Cys-62/Cys-126, Cys-70/Cys-117, Cys-71/Cys-105, and Cys-127/Cys-139.

This sequence belongs to the fungal hydrophobin family.

Its subcellular location is the secreted. The protein resides in the cell wall. Its function is as follows. Aerial growth, conidiation, and dispersal of filamentous fungi in the environment rely upon a capability of their secreting small amphipathic proteins called hydrophobins (HPBs) with low sequence identity. Class I can self-assemble into an outermost layer of rodlet bundles on aerial cell surfaces, conferring cellular hydrophobicity that supports fungal growth, development and dispersal; whereas Class II form highly ordered films at water-air interfaces through intermolecular interactions but contribute nothing to the rodlet structure. In P.expansum, hydrophobins contribute to germination, tolerance to cold stress and mycotoxins patulin and citrinin production. This chain is Class I hydrophobin E, found in Penicillium expansum (Blue mold rot fungus).